The primary structure comprises 80 residues: Defensin-like protein 18 (80 aa).

The N-terminal stretch at 1 to 29 (MAKFCTTITLILVALVLFADFEAPTIVKA) is a signal peptide. Disulfide bonds link Cys32–Cys80, Cys43–Cys64, Cys49–Cys74, and Cys53–Cys76.

Belongs to the DEFL family.

It is found in the secreted. Confers broad-spectrum resistance to pathogens. The chain is Defensin-like protein 18 (PDF1.5) from Arabidopsis thaliana (Mouse-ear cress).